Reading from the N-terminus, the 335-residue chain is MSDTVVSLTASPAAIRHDWTLAEIQAIHDMPLLDLVHRAGVVHRAHNDPADIQRAALLSIKTGGCPEDCAYCPQSAHHKGANLPRERLMPVDAVLKEAAAAKANGAHRFCMGAAWRKPKDGPDFDAVLEMVRGVRGLGMEACVTLGMLTQSQAQRLAEAGLTSYNHNLDTGPEFYGDIISTRTYDDRLQTLEHVRQAGIGVCCGGIVGMGERVRDRAEMLLVLANHAPHPESVPINALVAVEGTPLEDRPPIDPLDLVRMCATARIVMPKARVRLSAGRKSLTREAQILCFLAGANSIFYGERLLTTANNEADADAELLRDIGVPVPEVTLAAAE.

In terms of domain architecture, Radical SAM core spans 50–279 (ADIQRAALLS…KARVRLSAGR (230 aa)). Residues cysteine 65, cysteine 69, and cysteine 72 each contribute to the [4Fe-4S] cluster site. Residues cysteine 110, cysteine 142, cysteine 202, and arginine 274 each contribute to the [2Fe-2S] cluster site.

This sequence belongs to the radical SAM superfamily. Biotin synthase family. As to quaternary structure, homodimer. [4Fe-4S] cluster is required as a cofactor. The cofactor is [2Fe-2S] cluster.

The enzyme catalyses (4R,5S)-dethiobiotin + (sulfur carrier)-SH + 2 reduced [2Fe-2S]-[ferredoxin] + 2 S-adenosyl-L-methionine = (sulfur carrier)-H + biotin + 2 5'-deoxyadenosine + 2 L-methionine + 2 oxidized [2Fe-2S]-[ferredoxin]. Its pathway is cofactor biosynthesis; biotin biosynthesis; biotin from 7,8-diaminononanoate: step 2/2. Its function is as follows. Catalyzes the conversion of dethiobiotin (DTB) to biotin by the insertion of a sulfur atom into dethiobiotin via a radical-based mechanism. The polypeptide is Biotin synthase (Methylorubrum extorquens (strain CM4 / NCIMB 13688) (Methylobacterium extorquens)).